Here is a 245-residue protein sequence, read N- to C-terminus: MSSLVSRCQVIALLVLFFFGVCLAGKDIPANFVFGDSLVEVGNNNYLATLAKANNFPNGIDFGSPTGRFTNGRTIVDIIYQALGSDELTPPYLAPTTRGPLILNGANYAPGGSGPLNSPGSTNLDSWSPEQLKAMMFGVNYLAPVFFKKMDGQTIAISSLSTLSRAANLYRQILAKEVAKAIAQDTTTDLPKASHGVSSSSVKEELRPKETYFCDFYGRPIVYPILTSARRVTWARKINYDINNM.

The first 24 residues, 1 to 24 (MSSLVSRCQVIALLVLFFFGVCLA), serve as a signal peptide directing secretion. Catalysis depends on serine 37, which acts as the Nucleophile.

It belongs to the 'GDSL' lipolytic enzyme family.

Its subcellular location is the secreted. In Arabidopsis thaliana (Mouse-ear cress), this protein is GDSL esterase/lipase At4g16220.